Consider the following 195-residue polypeptide: Alkyl hydroperoxide reductase C (195 aa).

Residues 4-170 enclose the Thioredoxin domain; that stretch reads LTIGDQFPEY…VLRVLDALQS (167 aa). K41 is covalently cross-linked (Isoglutamyl lysine isopeptide (Lys-Gln) (interchain with Q-Cter in protein Pup)). C61 (cysteine sulfenic acid (-SOH) intermediate) is an active-site residue.

This sequence belongs to the peroxiredoxin family. AhpC/Prx1 subfamily. As to quaternary structure, homodimer; disulfide-linked, upon oxidation. 6 homodimers assemble to form a ring-like dodecamer. Identified in a complex with AhpD, DlaT and Lpd.

It localises to the cytoplasm. The catalysed reaction is N(6)-[(R)-dihydrolipoyl]-L-lysyl-[lipoyl-carrier protein] + a hydroperoxide = N(6)-[(R)-lipoyl]-L-lysyl-[lipoyl-carrier protein] + an alcohol + H2O. In terms of biological role, thiol-specific peroxidase that catalyzes the reduction of hydrogen peroxide and organic hydroperoxides to water and alcohols, respectively. Plays a role in cell protection against oxidative stress by detoxifying peroxides. Together with AhpD, DlaT and Lpd, constitutes an NADH-dependent peroxidase active against hydrogen and alkyl peroxides as well as serving as a peroxynitrite reductase, thus protecting the bacterium against reactive nitrogen intermediates and oxidative stress generated by the host immune system. Does not however seem to play a role in detoxification of isoniazid. The polypeptide is Alkyl hydroperoxide reductase C (Mycolicibacterium smegmatis (strain ATCC 700084 / mc(2)155) (Mycobacterium smegmatis)).